An 89-amino-acid chain; its full sequence is Small ribosomal subunit protein uS15 (89 aa).

Belongs to the universal ribosomal protein uS15 family. As to quaternary structure, part of the 30S ribosomal subunit. Forms a bridge to the 50S subunit in the 70S ribosome, contacting the 23S rRNA.

Functionally, one of the primary rRNA binding proteins, it binds directly to 16S rRNA where it helps nucleate assembly of the platform of the 30S subunit by binding and bridging several RNA helices of the 16S rRNA. Its function is as follows. Forms an intersubunit bridge (bridge B4) with the 23S rRNA of the 50S subunit in the ribosome. This is Small ribosomal subunit protein uS15 from Staphylococcus epidermidis (strain ATCC 12228 / FDA PCI 1200).